The sequence spans 75 residues: UPF0270 protein PST_1436 (75 aa).

The protein belongs to the UPF0270 family.

In Stutzerimonas stutzeri (strain A1501) (Pseudomonas stutzeri), this protein is UPF0270 protein PST_1436.